We begin with the raw amino-acid sequence, 184 residues long: Putative F-box protein At4g22420 (184 aa).

Positions 1 to 46 constitute an F-box domain; sequence MAECPTDLINEMFLRLRATTLKKCRVLSKPCFSLIDSPEKRVIERS. Residues 68-126 form a disordered region; it reads DDDEEEGNELKKSQARRNGVAKGEGNGNKVNGEAQEEVDDEEDDDDDASKGRGKHSRHV. The span at 85–100 shows a compositional bias: low complexity; sequence NGVAKGEGNGNKVNGE. Residues 101–114 show a composition bias toward acidic residues; it reads AQEEVDDEEDDDDD.

The protein is Putative F-box protein At4g22420 of Arabidopsis thaliana (Mouse-ear cress).